A 101-amino-acid chain; its full sequence is Small ribosomal subunit protein uS14 (101 aa).

It belongs to the universal ribosomal protein uS14 family. In terms of assembly, part of the 30S ribosomal subunit. Contacts proteins S3 and S10.

Binds 16S rRNA, required for the assembly of 30S particles and may also be responsible for determining the conformation of the 16S rRNA at the A site. This Ectopseudomonas mendocina (strain ymp) (Pseudomonas mendocina) protein is Small ribosomal subunit protein uS14.